The primary structure comprises 122 residues: Large ribosomal subunit protein bL12 (122 aa).

It belongs to the bacterial ribosomal protein bL12 family. Homodimer. Part of the ribosomal stalk of the 50S ribosomal subunit. Forms a multimeric L10(L12)X complex, where L10 forms an elongated spine to which 2 to 4 L12 dimers bind in a sequential fashion. Binds GTP-bound translation factors.

Functionally, forms part of the ribosomal stalk which helps the ribosome interact with GTP-bound translation factors. Is thus essential for accurate translation. This is Large ribosomal subunit protein bL12 from Staphylococcus haemolyticus (strain JCSC1435).